The primary structure comprises 666 residues: Chaperone protein HtpG (666 aa).

Positions 1–374 are a; substrate-binding; that stretch reads MSELNPVDNQ…SADLPLNVSR (374 aa). Positions 375-593 are b; sequence ELLQESRDVK…EGELSPQMIQ (219 aa). Residues 594-666 form a c region; it reads MLKQMGQDVP…LRRVNELLMR (73 aa).

This sequence belongs to the heat shock protein 90 family. Homodimer.

Its subcellular location is the cytoplasm. Molecular chaperone. Has ATPase activity. The sequence is that of Chaperone protein HtpG from Psychrobacter cryohalolentis (strain ATCC BAA-1226 / DSM 17306 / VKM B-2378 / K5).